Here is a 219-residue protein sequence, read N- to C-terminus: Deoxyribose-phosphate aldolase (219 aa).

Catalysis depends on aspartate 89, which acts as the Proton donor/acceptor. The active-site Schiff-base intermediate with acetaldehyde is lysine 151. Lysine 180 (proton donor/acceptor) is an active-site residue.

The protein belongs to the DeoC/FbaB aldolase family. DeoC type 1 subfamily.

Its subcellular location is the cytoplasm. The catalysed reaction is 2-deoxy-D-ribose 5-phosphate = D-glyceraldehyde 3-phosphate + acetaldehyde. The protein operates within carbohydrate degradation; 2-deoxy-D-ribose 1-phosphate degradation; D-glyceraldehyde 3-phosphate and acetaldehyde from 2-deoxy-alpha-D-ribose 1-phosphate: step 2/2. Catalyzes a reversible aldol reaction between acetaldehyde and D-glyceraldehyde 3-phosphate to generate 2-deoxy-D-ribose 5-phosphate. The protein is Deoxyribose-phosphate aldolase of Coprothermobacter proteolyticus (strain ATCC 35245 / DSM 5265 / OCM 4 / BT).